A 160-amino-acid chain; its full sequence is Ribosomal RNA large subunit methyltransferase H (160 aa).

Residues leucine 76, glycine 108, and leucine 127–tryptophan 132 contribute to the S-adenosyl-L-methionine site.

It belongs to the RNA methyltransferase RlmH family. As to quaternary structure, homodimer.

The protein resides in the cytoplasm. The enzyme catalyses pseudouridine(1915) in 23S rRNA + S-adenosyl-L-methionine = N(3)-methylpseudouridine(1915) in 23S rRNA + S-adenosyl-L-homocysteine + H(+). Specifically methylates the pseudouridine at position 1915 (m3Psi1915) in 23S rRNA. The polypeptide is Ribosomal RNA large subunit methyltransferase H (Agrobacterium fabrum (strain C58 / ATCC 33970) (Agrobacterium tumefaciens (strain C58))).